Reading from the N-terminus, the 813-residue chain is Origin of replication complex subunit 1B (813 aa).

A disordered region spans residues 1–109 (MASTPRAKTF…TPKKKKKIDS (109 aa)). Over residues 11–21 (KSPTKTPSNIY) the composition is skewed to polar residues. The segment covering 27–41 (SPSSTSHTPQTPETH) has biased composition (low complexity). Residues 43 to 52 (PLRRSARHVS) are compositionally biased toward basic residues. The Nuclear localization signal motif lies at 83 to 90 (PRKPTTDV). The tract at residues 163-187 (DPEIEDCQICFKSDTNIMIECDDCL) is histone H3 binding. A PHD-type zinc finger spans residues 166 to 215 (IEDCQICFKSDTNIMIECDDCLGGFHLKCLKPPLKEVPEGDWICQFCEVK). Cysteine 169, cysteine 172, cysteine 183, cysteine 186, histidine 191, and cysteine 194 together coordinate Zn(2+). Residues 203–207 (PEGDW) are histone H3 binding. Residues cysteine 209 and cysteine 212 each coordinate Zn(2+). Residues 226-344 (PKPPEGKKLA…VHWRSFKRLA (119 aa)) form the BAH domain. Residues 319–324 (ASNDGD) are histone H3 binding. The segment at 349 to 372 (GDSDSDQEWNGRKEEEVDDSDEEM) is disordered. The tract at residues 436–803 (PKSLPCRSKE…DDVAFALKDN (368 aa)) is necessary and sufficient for ORC complex assembly. Residue 471-479 (GVPGTGKTI) participates in ATP binding. The Mg(2+) site is built by aspartate 561 and glutamate 562. Positions 562, 595, and 660 each coordinate ATP.

It belongs to the ORC1 family. Component of the origin recognition complex (ORC) composed of at least ORC1 (ORC1A or ORC1B), ORC2, ORC3, ORC4, ORC5 and ORC6. ORC is regulated in a cell-cycle and development dependent manner. It is sequentially assembled at the exit from anaphase of mitosis and disassembled as cells enter S phase. Interacts directly with ORC2 and ORC5. Binds mostly unmodified histone H3, and, with lower efficiency, H3K4me1 H3K4me2 and H3K4me3. In terms of tissue distribution, follow a cell-cycle regulation with a peak at the G1/S-phase. Mostly expressed in flower buds, and, to a lower exent, in roots, leaves and stems.

The protein resides in the nucleus. In terms of biological role, essential protein required for ovules fertilization. Component of the origin recognition complex (ORC) that binds origins of replication. It has a role in both chromosomal replication and mating type transcriptional silencing. Binds to the ARS consensus sequence (ACS) of origins of replication. H3K4me3 effector that positively regulates the transcription of a subset of genes. In Arabidopsis thaliana (Mouse-ear cress), this protein is Origin of replication complex subunit 1B.